A 304-amino-acid chain; its full sequence is UTP--glucose-1-phosphate uridylyltransferase 1 (304 aa).

This sequence belongs to the UDPGP type 2 family.

It catalyses the reaction alpha-D-glucose 1-phosphate + UTP + H(+) = UDP-alpha-D-glucose + diphosphate. The protein operates within carbohydrate metabolism; nucleotide-sugar metabolism. This chain is UTP--glucose-1-phosphate uridylyltransferase 1 (hasC1), found in Streptococcus pyogenes serotype M3 (strain ATCC BAA-595 / MGAS315).